The chain runs to 368 residues: Cystathionine beta-lyase (368 aa).

Lys-221 bears the N6-(pyridoxal phosphate)lysine mark.

The protein belongs to the class-II pyridoxal-phosphate-dependent aminotransferase family. MalY/PatB cystathionine beta-lyase subfamily. It depends on pyridoxal 5'-phosphate as a cofactor.

The catalysed reaction is L,L-cystathionine + H2O = L-homocysteine + pyruvate + NH4(+). The enzyme catalyses an S-substituted L-cysteine + H2O = a thiol + pyruvate + NH4(+). It functions in the pathway amino-acid biosynthesis; L-methionine biosynthesis via de novo pathway; L-homocysteine from L-cystathionine: step 1/1. Catalyzes the transformation of cystathionine to homocysteine. In Corynebacterium glutamicum (Brevibacterium saccharolyticum), this protein is Cystathionine beta-lyase (metC).